The following is an 822-amino-acid chain: Fibroblast growth factor receptor 1 (822 aa).

The N-terminal stretch at 1-21 is a signal peptide; sequence MWSWKCLLFWAVLVTATLCTA. Topologically, residues 22-376 are extracellular; the sequence is RPSPTLPEQA…AVMTSPLYLE (355 aa). The Ig-like C2-type 1 domain maps to 25-119; that stretch reads PTLPEQAQPW…DTTYFSVNVS (95 aa). Residues Cys55 and Cys101 are joined by a disulfide bond. N-linked (GlcNAc...) asparagine glycosylation is found at Asn77 and Asn117. The segment at 120–154 is disordered; that stretch reads DALPSSEDDDDDDDSSSEEKETDNTKPNRMPVAPY. A compositionally biased stretch (acidic residues) spans 125 to 135; the sequence is SEDDDDDDDSS. Positions 136 to 145 are enriched in basic and acidic residues; sequence SEEKETDNTK. 2 Ig-like C2-type domains span residues 158–246 and 255–357; these read PEKM…YQLD and PILQ…AWLT. Residues 160 to 177 form a heparin-binding region; sequence KMEKKLHAVPAAKTVKFK. Cysteines 178 and 230 form a disulfide. Residues Asn227, Asn240, Asn264, Asn296, Asn317, and Asn330 are each glycosylated (N-linked (GlcNAc...) asparagine). An intrachain disulfide couples Cys277 to Cys341. Residues 377–397 traverse the membrane as a helical segment; that stretch reads IIIYCTGAFLISCMVGSVIVY. At 398-822 the chain is on the cytoplasmic side; that stretch reads KMKSGTKKSD…QLANGGLKRR (425 aa). Residue Tyr463 is modified to Phosphotyrosine; by autocatalysis. Positions 478–767 constitute a Protein kinase domain; that stretch reads LVLGKPLGEG…VALTSNQEYL (290 aa). ATP contacts are provided by residues 484 to 490, Lys514, 562 to 564, and Asn568; these read LGEGCFG and EYA. Phosphotyrosine; by autocatalysis is present on residues Tyr583 and Tyr585. Catalysis depends on Asp623, which acts as the Proton acceptor. ATP contacts are provided by Arg627 and Asp641. Residues Tyr653, Tyr654, Tyr730, and Tyr766 each carry the phosphotyrosine; by autocatalysis modification. Over residues 778–792 the composition is skewed to polar residues; that stretch reads PSFPDTRSSTCSSGE. Residues 778–822 form a disordered region; sequence PSFPDTRSSTCSSGEDSVFSHEPLPEEPCLPRHPAQLANGGLKRR.

The protein belongs to the protein kinase superfamily. Tyr protein kinase family. Fibroblast growth factor receptor subfamily. In terms of assembly, monomer. Homodimer after ligand binding. Interacts predominantly with FGF1 and FGF2, but can also interact with FGF3, FGF4, FGF5, FGF6, FGF8, FGF10, FGF19, FGF21, FGF22 and FGF23 (in vitro). Ligand specificity is determined by tissue-specific expression of isoforms, and differences in the third Ig-like domain are crucial for ligand specificity. Affinity for fibroblast growth factors (FGFs) is increased by heparan sulfate glycosaminoglycans that function as coreceptors. Likewise, KLB increases the affinity for FGF19, FGF21 and FGF23. Interacts (phosphorylated on Tyr-766) with PLCG1 (via SH2 domains). Interacts with FRS2. Interacts with RPS6KA1. Interacts (via C-terminus) with NEDD4 (via WW3 domain). Interacts with KL. Interacts with SHB (via SH2 domain). Interacts with GRB10. Interacts with ANOS1; this interaction does not interfere with FGF2-binding to FGFR1, but prevents binding of heparin-bound FGF2. Interacts with SOX2 and SOX3. Interacts with FLRT1, FLRT2 and FLRT3. Found in a ternary complex with FGF1 and ITGAV:ITGB3. Post-translationally, autophosphorylated. Binding of FGF family members together with heparan sulfate proteoglycan or heparin promotes receptor dimerization and autophosphorylation on tyrosine residues. Autophosphorylation occurs in trans between the two FGFR molecules present in the dimer and proceeds in a highly ordered manner. Initial autophosphorylation at Tyr-653 increases the kinase activity by a factor of 50 to 100. After this, Tyr-583 becomes phosphorylated, followed by phosphorylation of Tyr-463, Tyr-766, Tyr-583 and Tyr-585. In a third stage, Tyr-654 is autophosphorylated, resulting in a further tenfold increase of kinase activity. Phosphotyrosine residues provide docking sites for interacting proteins and so are crucial for FGFR1 function and its regulation. In terms of processing, ubiquitinated. FGFR1 is rapidly ubiquitinated by NEDD4 after autophosphorylation, leading to internalization and lysosomal degradation. CBL is recruited to activated FGFR1 via FRS2 and GRB2, and mediates ubiquitination and subsequent degradation of FGFR1. N-glycosylated in the endoplasmic reticulum. The N-glycan chains undergo further maturation to an Endo H-resistant form in the Golgi apparatus. Detected in astrocytoma, neuroblastoma and adrenal cortex cell lines. Some isoforms are detected in foreskin fibroblast cell lines, however isoform 17, isoform 18 and isoform 19 are not detected in these cells.

Its subcellular location is the cell membrane. The protein localises to the nucleus. It localises to the cytoplasm. It is found in the cytosol. The protein resides in the cytoplasmic vesicle. It catalyses the reaction L-tyrosyl-[protein] + ATP = O-phospho-L-tyrosyl-[protein] + ADP + H(+). With respect to regulation, present in an inactive conformation in the absence of bound ligand. Ligand binding leads to dimerization and activation by sequential autophosphorylation on tyrosine residues. Inhibited by ARQ 069; this compound maintains the kinase in an inactive conformation and inhibits autophosphorylation. Inhibited by PD173074. Functionally, tyrosine-protein kinase that acts as a cell-surface receptor for fibroblast growth factors and plays an essential role in the regulation of embryonic development, cell proliferation, differentiation and migration. Required for normal mesoderm patterning and correct axial organization during embryonic development, normal skeletogenesis and normal development of the gonadotropin-releasing hormone (GnRH) neuronal system. Phosphorylates PLCG1, FRS2, GAB1 and SHB. Ligand binding leads to the activation of several signaling cascades. Activation of PLCG1 leads to the production of the cellular signaling molecules diacylglycerol and inositol 1,4,5-trisphosphate. Phosphorylation of FRS2 triggers recruitment of GRB2, GAB1, PIK3R1 and SOS1, and mediates activation of RAS, MAPK1/ERK2, MAPK3/ERK1 and the MAP kinase signaling pathway, as well as of the AKT1 signaling pathway. Promotes phosphorylation of SHC1, STAT1 and PTPN11/SHP2. In the nucleus, enhances RPS6KA1 and CREB1 activity and contributes to the regulation of transcription. FGFR1 signaling is down-regulated by IL17RD/SEF, and by FGFR1 ubiquitination, internalization and degradation. The chain is Fibroblast growth factor receptor 1 (FGFR1) from Homo sapiens (Human).